A 260-amino-acid polypeptide reads, in one-letter code: DNA repair protein RecO (260 aa).

The protein belongs to the RecO family.

Involved in DNA repair and RecF pathway recombination. The sequence is that of DNA repair protein RecO from Chlorobaculum parvum (strain DSM 263 / NCIMB 8327) (Chlorobium vibrioforme subsp. thiosulfatophilum).